We begin with the raw amino-acid sequence, 408 residues long: Bifunctional polynucleotide phosphatase/kinase (408 aa).

Residues 1–38 form a disordered region; it reads MSSKKRKSPPQESLTSYFEKSSKSSKKYGSQNKDSDSS. S8 bears the Phosphoserine mark. Composition is skewed to polar residues over residues 10–19 and 28–38; these read PQESLTSYFE and YGSQNKDSDSS. 263–270 provides a ligand contact to ATP; that stretch reads GFPSSGKS.

In the N-terminal section; belongs to the DNA 3' phosphatase family.

The protein localises to the nucleus. The catalysed reaction is a 3'end (2'-deoxyribonucleotide 3'-phosphate)-DNA + H2O = a 3'-end 2'-deoxyribonucleotide-DNA + phosphate. The enzyme catalyses a 5'-end dephospho-2'-deoxyribonucleoside-DNA + ATP = a 5'-end 5'-phospho-2'-deoxyribonucleoside-DNA + ADP + H(+). Its function is as follows. Catalyzes the phosphorylation of DNA at 5'-hydroxyl termini and can dephosphorylate its 3'-phosphate termini. Has a role in the repair of breaks in single-stranded DNA. In Schizosaccharomyces pombe (strain 972 / ATCC 24843) (Fission yeast), this protein is Bifunctional polynucleotide phosphatase/kinase (pnk1).